The following is a 695-amino-acid chain: Polyribonucleotide nucleotidyltransferase (695 aa).

D488 and D494 together coordinate Mg(2+). One can recognise a KH domain in the interval P554–V613. The S1 motif domain occupies G623–K690.

It belongs to the polyribonucleotide nucleotidyltransferase family. Component of the RNA degradosome, which is a multiprotein complex involved in RNA processing and mRNA degradation. It depends on Mg(2+) as a cofactor.

The protein localises to the cytoplasm. It carries out the reaction RNA(n+1) + phosphate = RNA(n) + a ribonucleoside 5'-diphosphate. Involved in mRNA degradation. Catalyzes the phosphorolysis of single-stranded polyribonucleotides processively in the 3'- to 5'-direction. This is Polyribonucleotide nucleotidyltransferase from Ruthia magnifica subsp. Calyptogena magnifica.